Consider the following 215-residue polypeptide: MCQSRYLLFLATLVLLNHLTSARVIPVSGPAKCLNQSQNLLKTTDDMVRTAREKLKHYSCTAGDIDHEDITRDKTSTLEACLPLELHKNESCLATKETSSIIRGSCLPPQKTSLMMTLCLGSIYEDLKMYQSEFQAINAALQSHNHQQITLDRNMLMAIDELMRSLNHSGETLHQKAPMGEADPYRVKMKLCILLHAFSTRVMTINRVMNYLSSS.

Residues Met1 to Ala22 form the signal peptide. 3 cysteine pairs are disulfide-bonded: Cys33/Cys106, Cys60/Cys192, and Cys81/Cys119. Residues Asn35, Asn89, and Asn167 are each glycosylated (N-linked (GlcNAc...) asparagine).

Belongs to the IL-6 superfamily. Heterodimer with IL12B; disulfide-linked. This heterodimer is known as interleukin IL-12. Heterodimer with EBI3/IL27B; not disulfide-linked. This heterodimer is known as interleukin IL-35. Interacts with NBR1; this interaction promotes IL-12 secretion.

The protein resides in the secreted. Heterodimerizes with IL12B to form the IL-12 cytokine or with EBI3/IL27B to form the IL-35 cytokine. IL-12 is primarily produced by professional antigen-presenting cells (APCs) such as B-cells and dendritic cells (DCs) as well as macrophages and granulocytes and regulates T-cell and natural killer-cell responses, induces the production of interferon-gamma (IFN-gamma), favors the differentiation of T-helper 1 (Th1) cells and is an important link between innate resistance and adaptive immunity. Mechanistically, exerts its biological effects through a receptor composed of IL12R1 and IL12R2 subunits. Binding to the receptor results in the rapid tyrosine phosphorylation of a number of cellular substrates including the JAK family kinases TYK2 and JAK2. In turn, recruited STAT4 gets phosphorylated and translocates to the nucleus where it regulates cytokine/growth factor responsive genes. As part of IL-35, plays essential roles in maintaining the immune homeostasis of the liver microenvironment and also functions as an immune-suppressive cytokine. Mediates biological events through unconventional receptors composed of IL12RB2 and gp130/IL6ST heterodimers or homodimers. Signaling requires the transcription factors STAT1 and STAT4, which form a unique heterodimer that binds to distinct DNA sites. This chain is Interleukin-12 subunit alpha (Il12a), found in Rattus norvegicus (Rat).